The following is a 496-amino-acid chain: UDP-N-acetylmuramoylalanine--D-glutamate ligase (496 aa).

130–136 serves as a coordination point for ATP; that stretch reads GTNGKTT.

This sequence belongs to the MurCDEF family. In terms of assembly, interacts with PknA. Post-translationally, phosphorylated by PknA.

It localises to the cytoplasm. It catalyses the reaction UDP-N-acetyl-alpha-D-muramoyl-L-alanine + D-glutamate + ATP = UDP-N-acetyl-alpha-D-muramoyl-L-alanyl-D-glutamate + ADP + phosphate + H(+). The protein operates within cell wall biogenesis; peptidoglycan biosynthesis. Cell wall formation. Catalyzes the addition of glutamate to the nucleotide precursor UDP-N-acetylmuramoyl-L-alanine (UMA). This is UDP-N-acetylmuramoylalanine--D-glutamate ligase from Mycobacterium tuberculosis (strain ATCC 25177 / H37Ra).